A 525-amino-acid polypeptide reads, in one-letter code: Cytochrome P450 703A2 (525 aa).

Residues 3 to 23 (PFLLSIILCSWIFVVVSWKKL) traverse the membrane as a helical segment. Cys455 is a heme binding site.

Belongs to the cytochrome P450 family. The cofactor is heme.

It localises to the membrane. The catalysed reaction is dodecanoate + reduced [NADPH--hemoprotein reductase] + O2 = 7-hydroxydodecanoate + oxidized [NADPH--hemoprotein reductase] + H2O + H(+). Its function is as follows. Involved in pollen exine and anther epicuticular layer development. Catalyzes the in-chain hydroxylation of lauric acid (C12:0) preferentially on position 7, generating 7-hydroxylated lauric acid. Does not possess activity with other fatty acids (C14:0, C16:0, C16:1, and C18:0). Participates in a conserved pathway of in-chain hydroxylation of lauric acid required for anther cuticle and pollen exine formation. Directly regulated by TDR, a known regulator of tapetum programmed cell death (PCD) and pollen exine formation. The sequence is that of Cytochrome P450 703A2 from Oryza sativa subsp. japonica (Rice).